The primary structure comprises 248 residues: Phosphomannomutase (248 aa).

Aspartate 14 functions as the Nucleophile in the catalytic mechanism. Mg(2+) is bound by residues aspartate 14 and aspartate 16. Aspartate 16 functions as the Proton donor/acceptor in the catalytic mechanism. Arginine 23, arginine 125, arginine 136, arginine 143, serine 181, and aspartate 183 together coordinate alpha-D-mannose 1-phosphate. Residues aspartate 209, phenylalanine 221, and threonine 226 each coordinate Mg(2+).

Belongs to the eukaryotic PMM family. Homodimer. It depends on Mg(2+) as a cofactor.

It is found in the cytoplasm. The enzyme catalyses alpha-D-mannose 1-phosphate = D-mannose 6-phosphate. It participates in nucleotide-sugar biosynthesis; GDP-alpha-D-mannose biosynthesis; alpha-D-mannose 1-phosphate from D-fructose 6-phosphate: step 2/2. Functionally, catalyzes the interconversion of mannose-6-phosphate to mannose-1-phosphate, the precursor for the synthesis of GDP-mannose. GDP-mannose is an essential sugar nucleotide for the synthesis of D-mannose-containing cell wall polysaccharides (galactomannans and glucomannans), glycolipids, glycoproteins and the antioxidant L-ascorbate. The chain is Phosphomannomutase from Oryza sativa subsp. indica (Rice).